The sequence spans 226 residues: Small ribosomal subunit protein uS3 (226 aa).

The region spanning 39–107 (VRKFLNKELR…PAQINISEVR (69 aa)) is the KH type-2 domain.

This sequence belongs to the universal ribosomal protein uS3 family. Part of the 30S ribosomal subunit. Forms a tight complex with proteins S10 and S14.

Functionally, binds the lower part of the 30S subunit head. Binds mRNA in the 70S ribosome, positioning it for translation. The chain is Small ribosomal subunit protein uS3 from Idiomarina loihiensis (strain ATCC BAA-735 / DSM 15497 / L2-TR).